The chain runs to 48 residues: Cytochrome b559 subunit beta (48 aa).

Residues 23 to 39 (WLAVHALAIPTVFFLGA) traverse the membrane as a helical segment. His-27 is a binding site for heme.

This sequence belongs to the PsbE/PsbF family. Heterodimer of an alpha subunit and a beta subunit. PSII is composed of 1 copy each of membrane proteins PsbA, PsbB, PsbC, PsbD, PsbE, PsbF, PsbH, PsbI, PsbJ, PsbK, PsbL, PsbM, PsbT, PsbX, PsbY, Psb30/Ycf12, peripheral proteins PsbO, CyanoQ (PsbQ), PsbU, PsbV and a large number of cofactors. It forms dimeric complexes. The cofactor is heme b.

Its subcellular location is the cellular thylakoid membrane. In terms of biological role, this b-type cytochrome is tightly associated with the reaction center of photosystem II (PSII). PSII is a light-driven water:plastoquinone oxidoreductase that uses light energy to abstract electrons from H(2)O, generating O(2) and a proton gradient subsequently used for ATP formation. It consists of a core antenna complex that captures photons, and an electron transfer chain that converts photonic excitation into a charge separation. The chain is Cytochrome b559 subunit beta from Prochlorococcus marinus (strain SARG / CCMP1375 / SS120).